A 557-amino-acid polypeptide reads, in one-letter code: Formate--tetrahydrofolate ligase (557 aa).

65–72 (TPAGEGKT) contributes to the ATP binding site.

The protein belongs to the formate--tetrahydrofolate ligase family.

The catalysed reaction is (6S)-5,6,7,8-tetrahydrofolate + formate + ATP = (6R)-10-formyltetrahydrofolate + ADP + phosphate. It participates in one-carbon metabolism; tetrahydrofolate interconversion. This is Formate--tetrahydrofolate ligase from Zymomonas mobilis subsp. mobilis (strain ATCC 31821 / ZM4 / CP4).